Here is a 481-residue protein sequence, read N- to C-terminus: Probable cytosol aminopeptidase (481 aa).

Mn(2+) contacts are provided by lysine 247 and aspartate 252. The active site involves lysine 259. Residues aspartate 270, aspartate 329, and glutamate 331 each contribute to the Mn(2+) site. Arginine 333 is an active-site residue.

The protein belongs to the peptidase M17 family. Requires Mn(2+) as cofactor.

The protein localises to the cytoplasm. It carries out the reaction Release of an N-terminal amino acid, Xaa-|-Yaa-, in which Xaa is preferably Leu, but may be other amino acids including Pro although not Arg or Lys, and Yaa may be Pro. Amino acid amides and methyl esters are also readily hydrolyzed, but rates on arylamides are exceedingly low.. The catalysed reaction is Release of an N-terminal amino acid, preferentially leucine, but not glutamic or aspartic acids.. Its function is as follows. Presumably involved in the processing and regular turnover of intracellular proteins. Catalyzes the removal of unsubstituted N-terminal amino acids from various peptides. The chain is Probable cytosol aminopeptidase from Clostridium tetani (strain Massachusetts / E88).